The following is a 228-amino-acid chain: MADS-box transcription factor 22 (228 aa).

Positions 1–61 (MARERREIKR…GKLSHFASSS (61 aa)) constitute an MADS-box domain. A K-box domain is found at 86 to 176 (LNLEHSKYAH…RNQVSQISPA (91 aa)). A disordered region spans residues 189 to 217 (EGQSSESVMTALHSGSSQSQDNDDGSDVS).

Expressed in palea and stamen primordia. Expressed in shoots and coleoptiles.

It localises to the nucleus. Its function is as follows. Probable transcription factor. May be required for spikelet (rice flower) development. Transcription factor that functions to support the MADS55 in its function as negative regulator of brassinosteroid signaling. In Oryza sativa subsp. japonica (Rice), this protein is MADS-box transcription factor 22 (MADS22).